The following is a 188-amino-acid chain: Pyridoxal 5'-phosphate synthase subunit PdxT (188 aa).

Residue 47–49 (GES) participates in L-glutamine binding. The active-site Nucleophile is the cysteine 79. L-glutamine-binding positions include arginine 105 and 134-135 (IR). Catalysis depends on charge relay system residues histidine 170 and glutamate 172.

This sequence belongs to the glutaminase PdxT/SNO family. In terms of assembly, in the presence of PdxS, forms a dodecamer of heterodimers. Only shows activity in the heterodimer.

It catalyses the reaction aldehydo-D-ribose 5-phosphate + D-glyceraldehyde 3-phosphate + L-glutamine = pyridoxal 5'-phosphate + L-glutamate + phosphate + 3 H2O + H(+). The catalysed reaction is L-glutamine + H2O = L-glutamate + NH4(+). It functions in the pathway cofactor biosynthesis; pyridoxal 5'-phosphate biosynthesis. In terms of biological role, catalyzes the hydrolysis of glutamine to glutamate and ammonia as part of the biosynthesis of pyridoxal 5'-phosphate. The resulting ammonia molecule is channeled to the active site of PdxS. The protein is Pyridoxal 5'-phosphate synthase subunit PdxT of Listeria monocytogenes serovar 1/2a (strain ATCC BAA-679 / EGD-e).